The following is a 152-amino-acid chain: UPF0178 protein NIS_0137 (152 aa).

It belongs to the UPF0178 family.

The protein is UPF0178 protein NIS_0137 of Nitratiruptor sp. (strain SB155-2).